The primary structure comprises 283 residues: Pantothenate synthetase (283 aa).

An ATP-binding site is contributed by 30-37 (MGNLHAGH). The active-site Proton donor is the His-37. Residue Gln-61 participates in (R)-pantoate binding. Gln-61 provides a ligand contact to beta-alanine. 149–152 (GQKD) serves as a coordination point for ATP. Position 155 (Gln-155) interacts with (R)-pantoate. ATP-binding positions include Val-178 and 186–189 (LSSR).

Belongs to the pantothenate synthetase family. In terms of assembly, homodimer.

The protein localises to the cytoplasm. It carries out the reaction (R)-pantoate + beta-alanine + ATP = (R)-pantothenate + AMP + diphosphate + H(+). Its pathway is cofactor biosynthesis; (R)-pantothenate biosynthesis; (R)-pantothenate from (R)-pantoate and beta-alanine: step 1/1. In terms of biological role, catalyzes the condensation of pantoate with beta-alanine in an ATP-dependent reaction via a pantoyl-adenylate intermediate. This chain is Pantothenate synthetase, found in Hydrogenovibrio crunogenus (strain DSM 25203 / XCL-2) (Thiomicrospira crunogena).